The sequence spans 321 residues: Beta-lactamase (321 aa).

The N-terminal stretch at 1-30 (MEKNRKKQIVVLSIALVCIFILVFSLFHKS) is a signal peptide. Ser-83 (acyl-ester intermediate) is an active-site residue. 233–235 (KTG) is a substrate binding site.

Belongs to the class-A beta-lactamase family.

The enzyme catalyses a beta-lactam + H2O = a substituted beta-amino acid. With respect to regulation, inhibited by clavulanic acid. In terms of biological role, can hydrolyze cephalosporins, penicillins and also cefoxitin; but at a slow rate. This Phocaeicola vulgatus (Bacteroides vulgatus) protein is Beta-lactamase (cfxA).